A 410-amino-acid chain; its full sequence is MAKINDNYLKLKAGYLFPEIGRRVREFSAANPEAKVIRLGIGDVTRPLAPAIIKAFHDAVDDLATIDNFAGYGPEQGYDWLINAIIEKSYKPLGVSLKTEEMFISDGSKCDCANILDIFALDNVVAIGDPVYPVYNDTNVMIGRTGDADEKGYYKGIVYMPCTEANGFIPSLPTEKVDIIYLCFPNNPTGTVATKAELKKWVDYANANDAVIFFDAAYEAFITDPAIPHSIYEIEGAKKCAIEFRSFSKTAGFTGVRCGLVVVPEEVMGTTPTGEKYSFNKLWLRRTTTKFNGASYPVQKAAAAVYSDEGWKQNKEIIDYYMENARIIREGLAAAGLTVYGGVNAPYIWLKTPGGMSSWDFFDKLLTECNVVGTPGSGFGPSGEGFFRLSAFGHRENVIEAVERIKKNLK.

Residues Tyr15 and Gly42 each contribute to the substrate site. Residues Tyr72, 108 to 109 (SK), Tyr132, Asn187, Tyr218, and 246 to 248 (SFS) each bind pyridoxal 5'-phosphate. Positions 109, 132, and 187 each coordinate substrate. Lys249 carries the N6-(pyridoxal phosphate)lysine modification. Pyridoxal 5'-phosphate is bound by residues Arg257 and Asn292. The substrate site is built by Asn292 and Arg388.

It belongs to the class-I pyridoxal-phosphate-dependent aminotransferase family. LL-diaminopimelate aminotransferase subfamily. In terms of assembly, homodimer. Pyridoxal 5'-phosphate is required as a cofactor.

The catalysed reaction is (2S,6S)-2,6-diaminopimelate + 2-oxoglutarate = (S)-2,3,4,5-tetrahydrodipicolinate + L-glutamate + H2O + H(+). The protein operates within amino-acid biosynthesis; L-lysine biosynthesis via DAP pathway; LL-2,6-diaminopimelate from (S)-tetrahydrodipicolinate (aminotransferase route): step 1/1. Its function is as follows. Involved in the synthesis of meso-diaminopimelate (m-DAP or DL-DAP), required for both lysine and peptidoglycan biosynthesis. Catalyzes the direct conversion of tetrahydrodipicolinate to LL-diaminopimelate. The protein is LL-diaminopimelate aminotransferase of Geobacter metallireducens (strain ATCC 53774 / DSM 7210 / GS-15).